A 433-amino-acid polypeptide reads, in one-letter code: Acetylcholine receptor-like protein cup-4 (433 aa).

A signal peptide spans 1 to 24; that stretch reads MKIIIFVCFILIFYLPIQKKHVNS. Asn41 and Asn68 each carry an N-linked (GlcNAc...) asparagine glycan. Cys178 and Cys192 form a disulfide bridge. 2 N-linked (GlcNAc...) asparagine glycosylation sites follow: Asn237 and Asn249. 4 helical membrane-spanning segments follow: residues 282–302, 307–327, 337–357, and 413–433; these read EAAV…TFFI, STFL…HDLV, IPFC…TLVL, and PIIG…CLLL.

Belongs to the ligand-gated ion channel (TC 1.A.9) family. Acetylcholine receptor (TC 1.A.9.1) subfamily. In terms of tissue distribution, expressed in coelomocytes.

Its subcellular location is the cytoplasmic vesicle membrane. Thought to regulate endocytosis in coelomocytes through modulation of phospholipase C activity. Possible acetylcholine receptor. The polypeptide is Acetylcholine receptor-like protein cup-4 (cup-4) (Caenorhabditis elegans).